A 243-amino-acid chain; its full sequence is MLTFLIPTAKEMTTPKESHPHLLPQDSQAILKIMTAMTTEDLAKSYRIKEEAAKKEQQRWQDMASQQSLAYPAYQLFNGLMYRHIKRDKLTTQEQAYLTQQVYITSSFYGIIPANHPIAEHRHDFHTRIKIEGQSLKSYWRPCYNQFAKEHPQVISLLSSEFDDVFSKDCKQLWISPKFMAEKEGQFKTHSTISKKARGAFLTACMENNCQTVDSLKSLVFAGFYYHPDLSTDHEFVYIKKEA.

Belongs to the UPF0246 family.

This is UPF0246 protein spyM18_2163 from Streptococcus pyogenes serotype M18 (strain MGAS8232).